The chain runs to 161 residues: Stress response protein YvgO (161 aa).

An N-terminal signal peptide occupies residues 1–26; the sequence is MKRIRIPMTLALGAALTIAPLSFASA.

The chain is Stress response protein YvgO (yvgO) from Bacillus subtilis (strain 168).